The chain runs to 437 residues: Protein translocase subunit SecY (437 aa).

The next 10 helical transmembrane spans lie at 19-39 (LFTL…IPGV), 69-89 (LLQI…SIIL), 122-142 (VALA…GALF), 157-177 (IFTT…VMWL), 189-209 (GMSI…LWSI), 219-239 (WIEF…VVFV), 275-295 (GIIP…VVQF), 318-338 (HITV…AISF), 378-398 (GSLY…PLGA), and 400-420 (QNFP…LETV).

Belongs to the SecY/SEC61-alpha family. As to quaternary structure, component of the Sec protein translocase complex. Heterotrimer consisting of SecY, SecE and SecG subunits. The heterotrimers can form oligomers, although 1 heterotrimer is thought to be able to translocate proteins. Interacts with the ribosome. Interacts with SecDF, and other proteins may be involved. Interacts with SecA.

Its subcellular location is the cell membrane. The central subunit of the protein translocation channel SecYEG. Consists of two halves formed by TMs 1-5 and 6-10. These two domains form a lateral gate at the front which open onto the bilayer between TMs 2 and 7, and are clamped together by SecE at the back. The channel is closed by both a pore ring composed of hydrophobic SecY resides and a short helix (helix 2A) on the extracellular side of the membrane which forms a plug. The plug probably moves laterally to allow the channel to open. The ring and the pore may move independently. The polypeptide is Protein translocase subunit SecY (Streptomyces scabiei).